Reading from the N-terminus, the 436-residue chain is T-box transcription factor TBX6 (436 aa).

The T-box DNA-binding region spans 100-273 (LWKEFSSVGT…ANPFAKGFRE (174 aa)). Basic and acidic residues predominate over residues 271–284 (FRENGRNCKRERDA). Disordered stretches follow at residues 271 to 339 (FREN…APAP) and 360 to 379 (PSHLPTRSPSFPEAPDSGRS). Over residues 325–339 (EQAPAPGEATAAPAP) the composition is skewed to low complexity.

In terms of assembly, forms a dimeric complex with DNA (in vitro). As to expression, expressed in fetal tail bud, posterior spinal tissue, intervertebral disk and testis. Also expressed in adult testis, kidney, lung, muscle and thymus.

It localises to the nucleus. Its function is as follows. T-box transcription factor that plays an essential role in the determination of the fate of axial stem cells: neural vs mesodermal. Acts in part by down-regulating, a specific enhancer (N1) of SOX2, to inhibit neural development. Seems to play also an essential role in left/right axis determination and acts through effects on Notch signaling around the node as well as through an effect on the morphology and motility of the nodal cilia. This Homo sapiens (Human) protein is T-box transcription factor TBX6 (TBX6).